The chain runs to 297 residues: Aspartate carbamoyltransferase catalytic subunit (297 aa).

Positions 49 and 50 each coordinate carbamoyl phosphate. Lys-77 provides a ligand contact to L-aspartate. Carbamoyl phosphate-binding residues include Arg-99, His-129, and Gln-132. 2 residues coordinate L-aspartate: Arg-162 and Arg-215. The carbamoyl phosphate site is built by Gly-256 and Pro-257.

It belongs to the aspartate/ornithine carbamoyltransferase superfamily. ATCase family. Heterododecamer (2C3:3R2) of six catalytic PyrB chains organized as two trimers (C3), and six regulatory PyrI chains organized as three dimers (R2).

It catalyses the reaction carbamoyl phosphate + L-aspartate = N-carbamoyl-L-aspartate + phosphate + H(+). The protein operates within pyrimidine metabolism; UMP biosynthesis via de novo pathway; (S)-dihydroorotate from bicarbonate: step 2/3. Catalyzes the condensation of carbamoyl phosphate and aspartate to form carbamoyl aspartate and inorganic phosphate, the committed step in the de novo pyrimidine nucleotide biosynthesis pathway. In Legionella pneumophila (strain Corby), this protein is Aspartate carbamoyltransferase catalytic subunit.